The primary structure comprises 120 residues: Large ribosomal subunit protein bL17 (120 aa).

This sequence belongs to the bacterial ribosomal protein bL17 family. In terms of assembly, part of the 50S ribosomal subunit. Contacts protein L32.

The polypeptide is Large ribosomal subunit protein bL17 (Bacillus velezensis (strain DSM 23117 / BGSC 10A6 / LMG 26770 / FZB42) (Bacillus amyloliquefaciens subsp. plantarum)).